A 263-amino-acid polypeptide reads, in one-letter code: Phosphatidylglycerol--prolipoprotein diacylglyceryl transferase (263 aa).

Transmembrane regions (helical) follow at residues 10-30 (VAITLGPLQFRWYGLMYLFGF), 56-76 (MVTYVILGVVLGGRIGYILFY), 91-111 (IWNGGMSFHGGLLGVVFAMWL), and 117-137 (GLGFMDVSDFVAPLIPPGLFF). Arginine 139 is a binding site for a 1,2-diacyl-sn-glycero-3-phospho-(1'-sn-glycerol). Helical transmembrane passes span 171 to 191 (PSQLYECALEGVILFLALWVF), 199 to 219 (GHVSGLFALLYGVFRFTVEFV), and 231 to 251 (FGWLTMGQVLCLPLIMLGLWL).

The protein belongs to the Lgt family.

It localises to the cell inner membrane. It carries out the reaction L-cysteinyl-[prolipoprotein] + a 1,2-diacyl-sn-glycero-3-phospho-(1'-sn-glycerol) = an S-1,2-diacyl-sn-glyceryl-L-cysteinyl-[prolipoprotein] + sn-glycerol 1-phosphate + H(+). It participates in protein modification; lipoprotein biosynthesis (diacylglyceryl transfer). Catalyzes the transfer of the diacylglyceryl group from phosphatidylglycerol to the sulfhydryl group of the N-terminal cysteine of a prolipoprotein, the first step in the formation of mature lipoproteins. This Nitratidesulfovibrio vulgaris (strain ATCC 29579 / DSM 644 / CCUG 34227 / NCIMB 8303 / VKM B-1760 / Hildenborough) (Desulfovibrio vulgaris) protein is Phosphatidylglycerol--prolipoprotein diacylglyceryl transferase.